Here is a 467-residue protein sequence, read N- to C-terminus: Venom serine carboxypeptidase (467 aa).

The signal sequence occupies residues 1–18; the sequence is MKKLVLLQFLFFISFARG. 2 N-linked (GlcNAc...) asparagine glycosylation sites follow: asparagine 130 and asparagine 169. Serine 202 is an active-site residue. N-linked (GlcNAc...) asparagine glycans are attached at residues asparagine 304, asparagine 322, and asparagine 344. Active-site residues include aspartate 387 and histidine 444.

This sequence belongs to the peptidase S10 family. Expressed by the venom duct.

The protein localises to the secreted. The enzyme catalyses Release of a C-terminal amino acid with broad specificity.. This Apis mellifera (Honeybee) protein is Venom serine carboxypeptidase.